We begin with the raw amino-acid sequence, 104 residues long: Large ribosomal subunit protein uL24 (104 aa).

This sequence belongs to the universal ribosomal protein uL24 family. Part of the 50S ribosomal subunit.

One of two assembly initiator proteins, it binds directly to the 5'-end of the 23S rRNA, where it nucleates assembly of the 50S subunit. In terms of biological role, one of the proteins that surrounds the polypeptide exit tunnel on the outside of the subunit. The sequence is that of Large ribosomal subunit protein uL24 from Pseudomonas savastanoi pv. phaseolicola (strain 1448A / Race 6) (Pseudomonas syringae pv. phaseolicola (strain 1448A / Race 6)).